The primary structure comprises 575 residues: Intermediate filament protein ifa-1 (575 aa).

Disordered stretches follow at residues 1–30 (MMEITRETMSFTSTTPSARAPLGGRTTGNV) and 45–72 (SGAGSGLSPFGQNAASTIRDSREREKKE). The tract at residues 1 to 72 (MMEITRETMS…RDSREREKKE (72 aa)) is head. Residues 7–17 (ETMSFTSTTPS) are compositionally biased toward polar residues. Basic and acidic residues predominate over residues 63 to 72 (RDSREREKKE). Residues 69-422 (EKKEMSDLND…KMLEGEENRA (354 aa)) form the IF rod domain. Residues 73-104 (MSDLNDRLASYIEKVRFLEAQNRKLAADLDAL) form a coil 1A region. The tract at residues 105–118 (RSKWGKDTHNIRNM) is linker 1. The coil 1B stretch occupies residues 119-256 (YEGELVDAQK…RVHDNEIKEL (138 aa)). The interval 257–274 (QTLASRDTTPENREFFKN) is linker 12. Residues 275–422 (ELSSAIRDIR…KMLEGEENRA (148 aa)) form a coil 2 region. A tail region spans residues 423–572 (GLKQLVEQVV…EERATHIQRQ (150 aa)). Residues 455 to 572 (SRQSFQRSAK…EERATHIQRQ (118 aa)) enclose the LTD domain.

This sequence belongs to the intermediate filament family. Forms some heteromeric filaments with ifb-1. As to expression, isoform d is abundantly expressed in the marginal cells of the pharynx, forming apicobasally oriented thick filament bundles that are attached to the apical and basal plasma membrane by hemi-adherens junctions. Expression of isoform c is also seen in the excretory cells and in the uterus. Isoform c is detectable in the amphid sensory neurins and the pharyngeal-intestinal valve. Both isoform c and isoform d are expressed in the rectum and vulva and in some neurons of the tail. In larvae, expression is seen in the excretory cell, the vulva, the rectum and in the thick filament bundles of the pharynx. Expression in pharynx begins in late embryos.

Its subcellular location is the cytoplasm. Cytoplasmic intermediate filaments make up the structural component of the cytoskeleton providing mechanical strength to cells. Essential protein required during embryogenesis especially for survival past the L1 larva stage, involved in intestine morphogenesis. The polypeptide is Intermediate filament protein ifa-1 (ifa-1) (Caenorhabditis elegans).